The sequence spans 92 residues: Small ribosomal subunit protein bS18 (92 aa).

Residues 1–22 (MADERAPQRSTSGPRKKRPFQR) form a disordered region.

It belongs to the bacterial ribosomal protein bS18 family. Part of the 30S ribosomal subunit. Forms a tight heterodimer with protein bS6.

Its function is as follows. Binds as a heterodimer with protein bS6 to the central domain of the 16S rRNA, where it helps stabilize the platform of the 30S subunit. The protein is Small ribosomal subunit protein bS18 of Citrifermentans bemidjiense (strain ATCC BAA-1014 / DSM 16622 / JCM 12645 / Bem) (Geobacter bemidjiensis).